Here is a 436-residue protein sequence, read N- to C-terminus: UPF0229 protein mll9637 (436 aa).

The tract at residues 54–103 (IPRKGTGEPTFGDDKESGRRQHILPGNRTFSSGDLIPKPGGGGGYGSAAG) is disordered.

It belongs to the UPF0229 family.

This is UPF0229 protein mll9637 from Mesorhizobium japonicum (strain LMG 29417 / CECT 9101 / MAFF 303099) (Mesorhizobium loti (strain MAFF 303099)).